Consider the following 230-residue polypeptide: Alpha-S1-casein (230 aa).

The signal sequence occupies residues 1 to 15 (MKLLILTCLVAVALA). A phosphoserine mark is found at Ser33, Ser83, Ser85, Ser86, Ser87, and Ser88. The segment covering 60 to 83 (DELKDTRNEPTEDHIMEDTERKES) has biased composition (basic and acidic residues). Disordered regions lie at residues 60–103 (DELK…DILK) and 211–230 (TPEGIASEDGGKTDVMPQWW). Low complexity predominate over residues 84-96 (GSSSSEEVVSSTT).

This sequence belongs to the alpha-casein family. In terms of tissue distribution, mammary gland specific. Secreted in milk.

It is found in the secreted. Important role in the capacity of milk to transport calcium phosphate. This chain is Alpha-S1-casein (CSN1S1), found in Camelus dromedarius (Dromedary).